Reading from the N-terminus, the 333-residue chain is tRNA N6-adenosine threonylcarbamoyltransferase (333 aa).

2 residues coordinate Fe cation: His-111 and His-115. Residues 134–138 (VVSGG), Asp-167, Gly-180, Asp-184, and Asn-273 each bind substrate. Residue Asp-302 coordinates Fe cation.

Belongs to the KAE1 / TsaD family. It depends on Fe(2+) as a cofactor.

The protein resides in the cytoplasm. It catalyses the reaction L-threonylcarbamoyladenylate + adenosine(37) in tRNA = N(6)-L-threonylcarbamoyladenosine(37) in tRNA + AMP + H(+). Required for the formation of a threonylcarbamoyl group on adenosine at position 37 (t(6)A37) in tRNAs that read codons beginning with adenine. Is involved in the transfer of the threonylcarbamoyl moiety of threonylcarbamoyl-AMP (TC-AMP) to the N6 group of A37, together with TsaE and TsaB. TsaD likely plays a direct catalytic role in this reaction. This is tRNA N6-adenosine threonylcarbamoyltransferase from Anaeromyxobacter sp. (strain Fw109-5).